We begin with the raw amino-acid sequence, 251 residues long: E3 ubiquitin-protein ligase MARCHF3 (251 aa).

The RING-CH-type zinc finger occupies 61–121; it reads QSFNDRPMCR…ELCHFRFSVE (61 aa). Positions 69, 72, 85, 87, 95, 98, 111, and 114 each coordinate Zn(2+). Transmembrane regions (helical) follow at residues 143–163 and 180–200; these read LFGD…SGWL and AVGL…WTLV.

The protein localises to the cytoplasmic vesicle membrane. It localises to the early endosome membrane. The enzyme catalyses S-ubiquitinyl-[E2 ubiquitin-conjugating enzyme]-L-cysteine + [acceptor protein]-L-lysine = [E2 ubiquitin-conjugating enzyme]-L-cysteine + N(6)-ubiquitinyl-[acceptor protein]-L-lysine.. It functions in the pathway protein modification; protein ubiquitination. In terms of biological role, E3 ubiquitin-protein ligase which may be involved in endosomal trafficking. E3 ubiquitin ligases accept ubiquitin from an E2 ubiquitin-conjugating enzyme in the form of a thioester and then directly transfer the ubiquitin to targeted substrates. The polypeptide is E3 ubiquitin-protein ligase MARCHF3 (marchf3) (Xenopus tropicalis (Western clawed frog)).